The primary structure comprises 52 residues: Proteinase inhibitor (52 aa).

The residue at position 1 (Gln1) is a Pyrrolidone carboxylic acid. Intrachain disulfides connect Cys3–Cys40, Cys6–Cys24, Cys7–Cys36, and Cys13–Cys49.

This sequence belongs to the protease inhibitor I20 (potato type II proteinase inhibitor) family.

It localises to the secreted. The polypeptide is Proteinase inhibitor (Solanum melongena (Eggplant)).